A 50-amino-acid chain; its full sequence is Phospholipase A2 trimorphin (50 aa).

Residues Y28, G30, and G32 each contribute to the Ca(2+) site. Residues C29 and C45 are joined by a disulfide bond. H48 is a catalytic residue. D49 is a binding site for Ca(2+).

It depends on Ca(2+) as a cofactor. Expressed by the venom gland.

The protein resides in the secreted. The enzyme catalyses a 1,2-diacyl-sn-glycero-3-phosphocholine + H2O = a 1-acyl-sn-glycero-3-phosphocholine + a fatty acid + H(+). Inhibited by EDTA. Its function is as follows. PLA2 catalyzes the calcium-dependent hydrolysis of the 2-acyl groups in 3-sn-phosphoglycerides. The sequence is that of Phospholipase A2 trimorphin from Trimorphodon lambda (Sonoran lyre snake).